We begin with the raw amino-acid sequence, 440 residues long: Exosome complex component RRP45 (440 aa).

Ser-65 bears the Phosphoserine mark. At Lys-297 the chain carries N6-acetyllysine; alternate. A Glycyl lysine isopeptide (Lys-Gly) (interchain with G-Cter in SUMO1); alternate cross-link involves residue Lys-297. Residue Lys-297 forms a Glycyl lysine isopeptide (Lys-Gly) (interchain with G-Cter in SUMO2); alternate linkage. Phosphoserine is present on residues Ser-306 and Ser-346. The disordered stretch occupies residues 341 to 362; that stretch reads EGIENSWGHLEDSEKEDEDEGG. Residues 353 to 362 are compositionally biased toward acidic residues; it reads SEKEDEDEGG. Residues Ser-393 and Ser-395 each carry the phosphoserine modification. The disordered stretch occupies residues 404–440; that stretch reads EPDKNPKKIRTQTISATQVKAPSKKPVKKRKKKRAAN. Over residues 425–440 the composition is skewed to basic residues; the sequence is PSKKPVKKRKKKRAAN.

The protein belongs to the RNase PH family. Component of the RNA exosome core complex (Exo-9), composed of EXOSC1, EXOSC2, EXOSC3, EXOSC4, EXOSC5, EXOSC6, EXOSC7, EXOSC8 and EXOSC9; within the complex interacts with EXOSC3, EXOSC4, EXOSC5 and DIS3. The catalytically inactive RNA exosome core complex (Exo-9) associates with the catalytic subunit EXOSC10/RRP6. Exo-9 may associate with DIS3 to form the nucleolar exosome complex, or DIS3L to form the cytoplasmic exosome complex. Exo-9 is formed by a hexameric base ring consisting of the heterodimers EXOSC4-EXOSC9, EXOSC5-EXOSC8 and EXOSC6-EXOSC7, and a cap ring consisting of EXOSC1, EXOSC2 and EXOSC3. The RNA exosome complex associates with cofactors C1D/RRP47, MPHOSPH6/MPP6 and MTREX/MTR4. Interacts (via C-terminus region) with SETX (via N-terminus domain); the interaction enhances SETX sumoylation. Interacts with DIS3; the interaction is direct.

It localises to the cytoplasm. The protein resides in the nucleus. Its subcellular location is the nucleolus. It is found in the nucleoplasm. In terms of biological role, non-catalytic component of the RNA exosome complex which has 3'-&gt;5' exoribonuclease activity and participates in a multitude of cellular RNA processing and degradation events. In the nucleus, the RNA exosome complex is involved in proper maturation of stable RNA species such as rRNA, snRNA and snoRNA, in the elimination of RNA processing by-products and non-coding 'pervasive' transcripts, such as antisense RNA species and promoter-upstream transcripts (PROMPTs), and of mRNAs with processing defects, thereby limiting or excluding their export to the cytoplasm. The RNA exosome may be involved in Ig class switch recombination (CSR) and/or Ig variable region somatic hypermutation (SHM) by targeting AICDA deamination activity to transcribed dsDNA substrates. In the cytoplasm, the RNA exosome complex is involved in general mRNA turnover and specifically degrades inherently unstable mRNAs containing AU-rich elements (AREs) within their 3' untranslated regions, and in RNA surveillance pathways, preventing translation of aberrant mRNAs. It seems to be involved in degradation of histone mRNA. The catalytic inactive RNA exosome core complex of 9 subunits (Exo-9) is proposed to play a pivotal role in the binding and presentation of RNA for ribonucleolysis, and to serve as a scaffold for the association with catalytic subunits and accessory proteins or complexes. EXOSC9 binds to ARE-containing RNAs. The sequence is that of Exosome complex component RRP45 (EXOSC9) from Bos taurus (Bovine).